The sequence spans 58 residues: Light-harvesting protein B-870 alpha chain (58 aa).

The Cytoplasmic portion of the chain corresponds to 1 to 15 (MSKFYKIWLVFDPRR). A helical membrane pass occupies residues 16-36 (VFVAQGVFLFLLAVLIHLILL). Histidine 32 serves as a coordination point for a bacteriochlorophyll. Over 37 to 58 (STPAFNWLTVATAKHGYVAAAQ) the chain is Periplasmic.

This sequence belongs to the antenna complex alpha subunit family. As to quaternary structure, the core complex is formed by different alpha and beta chains, binding bacteriochlorophyll molecules, and arranged most probably in tetrameric structures disposed around the reaction center. The non-pigmented gamma chains may constitute additional components.

It is found in the cell inner membrane. Functionally, antenna complexes are light-harvesting systems, which transfer the excitation energy to the reaction centers. The sequence is that of Light-harvesting protein B-870 alpha chain (pufA) from Rhodobacter capsulatus (Rhodopseudomonas capsulata).